A 599-amino-acid polypeptide reads, in one-letter code: MSDLSHIRNFSIIAHIDHGKSTLADRFIQMCGGLTAREMEAQVLDSMDLERERGITIKAHSVTLHYKAQDGKTYQLNFIDTPGHVDFTYEVSRSLAACEGALLVVDAGQGVEAQSVANCYTAIEQGLEVMPVLNKMDLPQADPDRVKDEIEKIIGIDATDAVACSAKSGMGVDEVLERLVQSIPAPEGEIDAPLQALIIDSWFDNYLGVVSLVRVRQGRVKKGDKILVKSTGKVHLVDSVGVFTPKHTQTADLKAGEVGFIIASIKDIHGAPVGDTLTLSNTPEVEVLPGFKKIQPQVYAGLFPVSSDDFEDFRDALQKLTLNDSSLQYMPESSDALGFGFRCGFLGMLHMEIIQERLEREYDLDLITTAPSVIYELELKTGETITVDNPSKLPDVSAVNDFREPIVTATILVPQEHLGNVITLCIEKRGVQRDMQFLGSQVQVRYDLPMNEVVLDFFDRLKSTSRGYASLDYHFDRYQSANLVKLDVLINGDKVDALALIVHRDNAAYKGRALTEKMKELIPRQMFDVAIQAAIGGQIIARTTVKALRKNVLAKCYGGDVSRKKKLLEKQKAGKKRMKQVGNVEIPQEAFLAVLRLDS.

The tr-type G domain occupies 5-187; it reads SHIRNFSIIA…RLVQSIPAPE (183 aa). GTP contacts are provided by residues 17–22 and 134–137; these read DHGKST and NKMD.

The protein belongs to the TRAFAC class translation factor GTPase superfamily. Classic translation factor GTPase family. LepA subfamily.

It is found in the cell inner membrane. The catalysed reaction is GTP + H2O = GDP + phosphate + H(+). In terms of biological role, required for accurate and efficient protein synthesis under certain stress conditions. May act as a fidelity factor of the translation reaction, by catalyzing a one-codon backward translocation of tRNAs on improperly translocated ribosomes. Back-translocation proceeds from a post-translocation (POST) complex to a pre-translocation (PRE) complex, thus giving elongation factor G a second chance to translocate the tRNAs correctly. Binds to ribosomes in a GTP-dependent manner. This is Elongation factor 4 from Pseudomonas entomophila (strain L48).